A 266-amino-acid polypeptide reads, in one-letter code: Hydroxymethylpyrimidine/phosphomethylpyrimidine kinase (266 aa).

Residue Q44 coordinates 4-amino-5-hydroxymethyl-2-methylpyrimidine.

This sequence belongs to the ThiD family. As to quaternary structure, monomer.

It carries out the reaction 4-amino-5-hydroxymethyl-2-methylpyrimidine + ATP = 4-amino-2-methyl-5-(phosphooxymethyl)pyrimidine + ADP + H(+). It catalyses the reaction 4-amino-2-methyl-5-(phosphooxymethyl)pyrimidine + ATP = 4-amino-2-methyl-5-(diphosphooxymethyl)pyrimidine + ADP. It functions in the pathway cofactor biosynthesis; thiamine diphosphate biosynthesis; 4-amino-2-methyl-5-diphosphomethylpyrimidine from 5-amino-1-(5-phospho-D-ribosyl)imidazole: step 2/3. Its pathway is cofactor biosynthesis; thiamine diphosphate biosynthesis; 4-amino-2-methyl-5-diphosphomethylpyrimidine from 5-amino-1-(5-phospho-D-ribosyl)imidazole: step 3/3. In terms of biological role, catalyzes the phosphorylation of hydroxymethylpyrimidine phosphate (HMP-P) to HMP-PP, and of HMP to HMP-P. Shows no activity with pyridoxal, pyridoxamine or pyridoxine. The chain is Hydroxymethylpyrimidine/phosphomethylpyrimidine kinase (thiD) from Escherichia coli (strain K12).